The primary structure comprises 383 residues: Agmatine deiminase (383 aa).

Residues aspartate 220 and aspartate 226 each contribute to the agmatine site. Catalysis depends on cysteine 366, which acts as the Amidino-cysteine intermediate.

It belongs to the agmatine deiminase family. In terms of assembly, forms homodimers.

The catalysed reaction is agmatine + H2O = N-carbamoylputrescine + NH4(+). Its pathway is amine and polyamine biosynthesis; putrescine biosynthesis via agmatine pathway; N-carbamoylputrescine from agmatine: step 1/1. Inhibited by N-ethylmaleimide and iodoacetamide. Its function is as follows. Mediates the hydrolysis of agmatine into N-carbamoylputrescine in the arginine decarboxylase (ADC) pathway of putrescine biosynthesis, a basic polyamine. This Arabidopsis thaliana (Mouse-ear cress) protein is Agmatine deiminase (AIH).